We begin with the raw amino-acid sequence, 471 residues long: MTQTADAASTALTSGDAASRNIPKIGFVSLGCPKALTDSELILTQLRAEGYDTSKSFAGADLVIVNTCGFIDDAVKESLDTIGEALAENGRVIVTGCLGAKAGEGGGNLVRQMHPSVLAVTGPHATQEVMDAVHVHVPKPHDPFVDLVPAYGVKLTPRHYAYLKISEGCNHRCSFCIIPSMRGDLVSRPIGDVLNEARALFESGVKELLVISQDTSAYGVDVKYRTGFWDGKPVKTRMTDLVERLGELAEPFGAWVRLHYVYPYPHVDEILPMMAGGRVLPYLDVPFQHAHPDVLKRMKRPANGEKNLERLQRWREACPQIVVRSTFIAGFPGETEAEFEHLLDFMREARIDRAGCFAYSPVEGASANALAGALPEAVREERRARFMAVAEAVSAEKLRERVGAEMQVLIDAAPALGKKGGRGRSYADAPEIDGVVHLLPPQKASKQLRVGEFTRARIVGTQGHDLVGQPL.

In terms of domain architecture, MTTase N-terminal spans 23–138 (PKIGFVSLGC…VMDAVHVHVP (116 aa)). 6 residues coordinate [4Fe-4S] cluster: C32, C68, C97, C169, C173, and C176. A Radical SAM core domain is found at 155–396 (LTPRHYAYLK…MAVAEAVSAE (242 aa)). One can recognise a TRAM domain in the interval 399-471 (RERVGAEMQV…QGHDLVGQPL (73 aa)).

It belongs to the methylthiotransferase family. RimO subfamily. [4Fe-4S] cluster serves as cofactor.

The protein resides in the cytoplasm. It catalyses the reaction L-aspartate(89)-[ribosomal protein uS12]-hydrogen + (sulfur carrier)-SH + AH2 + 2 S-adenosyl-L-methionine = 3-methylsulfanyl-L-aspartate(89)-[ribosomal protein uS12]-hydrogen + (sulfur carrier)-H + 5'-deoxyadenosine + L-methionine + A + S-adenosyl-L-homocysteine + 2 H(+). Catalyzes the methylthiolation of an aspartic acid residue of ribosomal protein uS12. This chain is Ribosomal protein uS12 methylthiotransferase RimO, found in Methylibium petroleiphilum (strain ATCC BAA-1232 / LMG 22953 / PM1).